Here is a 144-residue protein sequence, read N- to C-terminus: tRNA-specific adenosine deaminase (144 aa).

Residues 1 to 116 form the CMP/dCMP-type deaminase domain; that stretch reads MEQALKQAGI…SNLRYFNSSV (116 aa). Histidine 48 contacts Zn(2+). Glutamate 50 serves as the catalytic Proton donor. Positions 78 and 81 each coordinate Zn(2+).

The protein belongs to the cytidine and deoxycytidylate deaminase family. In terms of assembly, homodimer. Requires Zn(2+) as cofactor.

It carries out the reaction adenosine(34) in tRNA + H2O + H(+) = inosine(34) in tRNA + NH4(+). Functionally, catalyzes the deamination of adenosine to inosine at the wobble position 34 of tRNA(Arg2). The polypeptide is tRNA-specific adenosine deaminase (Rickettsia felis (strain ATCC VR-1525 / URRWXCal2) (Rickettsia azadi)).